Reading from the N-terminus, the 87-residue chain is Small ribosomal subunit protein eS21 (87 aa).

An N-acetylmethionine modification is found at Met1.

The protein belongs to the eukaryotic ribosomal protein eS21 family. Component of the small ribosomal subunit (SSU). Mature yeast ribosomes consist of a small (40S) and a large (60S) subunit. The 40S small subunit contains 1 molecule of ribosomal RNA (18S rRNA) and at least 33 different proteins. The large 60S subunit contains 3 rRNA molecules (25S, 5.8S and 5S rRNA) and at least 46 different proteins. Interacts with uS2A and uS2B, strongest interaction is with uS2B.

The protein localises to the cytoplasm. The protein resides in the nucleus. Its function is as follows. Component of the ribosome, a large ribonucleoprotein complex responsible for the synthesis of proteins in the cell. The small ribosomal subunit (SSU) binds messenger RNAs (mRNAs) and translates the encoded message by selecting cognate aminoacyl-transfer RNA (tRNA) molecules. The large subunit (LSU) contains the ribosomal catalytic site termed the peptidyl transferase center (PTC), which catalyzes the formation of peptide bonds, thereby polymerizing the amino acids delivered by tRNAs into a polypeptide chain. The nascent polypeptides leave the ribosome through a tunnel in the LSU and interact with protein factors that function in enzymatic processing, targeting, and the membrane insertion of nascent chains at the exit of the ribosomal tunnel. eS21 is required for the processing of the 20S rRNA-precursor to mature 18S rRNA in a late step of the maturation of 40S ribosomal subunits. Has a physiological role leading to 18S rRNA stability. In Schizosaccharomyces pombe (strain 972 / ATCC 24843) (Fission yeast), this protein is Small ribosomal subunit protein eS21 (rps21).